We begin with the raw amino-acid sequence, 254 residues long: Alcohol dehydrogenase 2 (254 aa).

10–33 is a binding site for NAD(+); it reads FVAGLGGIGFDTSREIVKSGPKNL. Ser138 lines the substrate pocket. The active-site Proton acceptor is the Tyr151.

The protein belongs to the short-chain dehydrogenases/reductases (SDR) family. As to quaternary structure, homodimer.

The catalysed reaction is a primary alcohol + NAD(+) = an aldehyde + NADH + H(+). It catalyses the reaction a secondary alcohol + NAD(+) = a ketone + NADH + H(+). The chain is Alcohol dehydrogenase 2 (Adh2) from Drosophila mulleri (Fruit fly).